Here is a 130-residue protein sequence, read N- to C-terminus: Ribosome-binding factor A (130 aa).

The protein belongs to the RbfA family. In terms of assembly, monomer. Binds 30S ribosomal subunits, but not 50S ribosomal subunits or 70S ribosomes.

It is found in the cytoplasm. Functionally, one of several proteins that assist in the late maturation steps of the functional core of the 30S ribosomal subunit. Associates with free 30S ribosomal subunits (but not with 30S subunits that are part of 70S ribosomes or polysomes). Required for efficient processing of 16S rRNA. May interact with the 5'-terminal helix region of 16S rRNA. This is Ribosome-binding factor A from Prochlorococcus marinus (strain MIT 9301).